The primary structure comprises 254 residues: Trans-aconitate 2-methyltransferase (254 aa).

This sequence belongs to the methyltransferase superfamily. Tam family.

The protein localises to the cytoplasm. The catalysed reaction is trans-aconitate + S-adenosyl-L-methionine = (E)-3-(methoxycarbonyl)pent-2-enedioate + S-adenosyl-L-homocysteine. Its function is as follows. Catalyzes the S-adenosylmethionine monomethyl esterification of trans-aconitate. The chain is Trans-aconitate 2-methyltransferase from Rhodococcus jostii (strain RHA1).